Consider the following 389-residue polypeptide: Arrestin-C (389 aa).

The disordered stretch occupies residues 369–389 (AQQEPSGESQEALAAEGNEGS).

This sequence belongs to the arrestin family. As to quaternary structure, homodimer; disulfide-linked in response to retinal illumination. Interacts with CXCR4; the interaction is dependent on the C-terminal phosphorylation of CXCR4 and modulates the calcium ion mobilization activity of CXCR4. Interacts with GPR84. Expressed in cone photoreceptors in the retina (at protein level).

It is found in the photoreceptor inner segment. Its subcellular location is the cell projection. The protein resides in the cilium. It localises to the photoreceptor outer segment. Functionally, may play a role in an as yet undefined retina-specific signal transduction. Could bind to photoactivated-phosphorylated red/green opsins. The chain is Arrestin-C (ARR3) from Bos taurus (Bovine).